The primary structure comprises 1561 residues: Adhesion G protein-coupled receptor B2 (1561 aa).

The first 20 residues, 1-20 (MTPACPLLLSVILSLRLATA), serve as a signal peptide directing secretion. Topologically, residues 21 to 930 (FDPAPSACSA…ELAGAPSVPL (910 aa)) are extracellular. Residues N94, N182, and N183 are each glycosylated (N-linked (GlcNAc...) asparagine). An O-linked (Xyl...) (chondroitin sulfate) serine glycan is attached at S257. TSP type-1 domains follow at residues 300 to 353 (DPAA…ATCP), 355 to 408 (HGVW…AACP), 410 to 463 (EGQW…LDCP), and 466 to 519 (DGKW…KRCP). Intrachain disulfides connect C312–C346, C316–C352, C327–C336, C367–C402, C371–C407, C382–C392, C422–C457, C426–C462, C437–C447, C478–C513, C482–C518, C493–C503, C525–C560, and C548–C578. An N-linked (GlcNAc...) asparagine glycan is attached at N347. N428 carries N-linked (GlcNAc...) asparagine glycosylation. N-linked (GlcNAc...) asparagine glycosylation is found at N551 and N636. Residues 748–918 (DRLFLPKEVL…AVLAQPPKDL (171 aa)) form the GAIN-B domain. Positions 757–797 (LSLSSPGKPATPGAATAGSPGRGRGPGTVPPGPGHAHQRLL) are disordered. The span at 760 to 775 (SSPGKPATPGAATAGS) shows a compositional bias: low complexity. N861 is a glycosylation site (N-linked (GlcNAc...) asparagine). Disulfide bonds link C868/C900 and C888/C902. The GPS stretch occupies residues 868-918 (CASWDYSRADTNSGDWNTESCQTLETQAAHTRCQCQHLSTFAVLAQPPKDL). A helical membrane pass occupies residues 931–951 (VIGCAVSCMALLTLLAIYAAF). At 952–959 (WRFIKSER) the chain is on the cytoplasmic side. A helical transmembrane segment spans residues 960–980 (SIILLNFCLSILASNILILVG). The Extracellular portion of the chain corresponds to 981–988 (QSRVLSKG). The chain crosses the membrane as a helical span at residues 989-1009 (VCTMTAAFLHFFFLSSFCWVL). Residues 1010–1030 (TEAWQSYLAVIGRMRTRLVRK) are Cytoplasmic-facing. Residues 1031–1051 (RFLCLGWGLPALVVAVSVGFT) form a helical membrane-spanning segment. At 1052–1072 (RTKGYGTSSYCWLSLEGGLLY) the chain is on the extracellular side. Residues 1073–1093 (AFVGPAAVIVLVNMLIGIIVF) traverse the membrane as a helical segment. The Cytoplasmic segment spans residues 1094 to 1115 (NKLMARDGVSDKSKKQRAGSER). Residues 1116–1136 (CPWASLLLPCSACGAVPSPLL) traverse the membrane as a helical segment. Over 1137-1147 (SSASARNAMAS) the chain is Extracellular. Residues 1148-1168 (LWSSCVVLPLLALTWMSAVLA) traverse the membrane as a helical segment. At 1169–1561 (MTDRRSVLFQ…PPDGDFQTEV (393 aa)) the chain is on the cytoplasmic side. Residue Y1345 is modified to Phosphotyrosine. Disordered regions lie at residues 1355–1377 (LQPG…GTPR), 1417–1447 (FQPP…PGST), and 1491–1561 (RYRS…QTEV). Over residues 1366-1376 (EAPRARPEGTP) the composition is skewed to basic and acidic residues. Positions 1491 to 1502 (RYRSQSSAKEKP) are enriched in basic and acidic residues. Polar residues predominate over residues 1519-1528 (SWSTFKSMTL). A compositionally biased stretch (acidic residues) spans 1551–1561 (EPPDGDFQTEV).

It belongs to the G-protein coupled receptor 2 family. Adhesion G-protein coupled receptor (ADGR) subfamily. In terms of assembly, heterodimer of 2 chains generated by proteolytic processing; the large extracellular N-terminal fragment and the membrane-bound C-terminal fragment predominantly remain associated and non-covalently linked. Interacts with GABPB2. Interacts (via carboxy-terminus) with TAX1BP3. Interacts with GNAZ. Interacts with SH3GL2. Glycosylated. In terms of processing, autoproteolytically processed at the GPS region of the GAIN-B domain; this cleavage modulates receptor activity. Additionally, furin is involved in the cleavage at another site, in the middle of the extracellular domain, generating a soluble fragment. As to expression, specifically expressed in the brain. The peak level in the brain is observed 10 days after birth.

The protein localises to the cell membrane. It is found in the secreted. Receptor activity is regulated by proteolytic processing. The long N-terminal has a an inhibitory effect on the constitutive signaling activity. Removal of the N-terminal region induces an increase of the receptor activity. Its function is as follows. Orphan G-protein coupled receptor involved in cell adhesion and probably in cell-cell interactions. Activates NFAT-signaling pathway, a transcription factor, via the G-protein GNAZ. Involved in angiogenesis inhibition. This chain is Adhesion G protein-coupled receptor B2 (Adgrb2), found in Mus musculus (Mouse).